Reading from the N-terminus, the 344-residue chain is GTPase Obg (344 aa).

In terms of domain architecture, Obg spans 1–159 (MKFLDLAKVY…RTIWLRLKLI (159 aa)). The region spanning 160–326 (ADVGLLGLPN…VLRVLRARVD (167 aa)) is the OBG-type G domain. GTP-binding positions include 166–173 (GLPNAGKS), 191–195 (FTTLV), 212–215 (DIPG), 279–282 (NKID), and 307–309 (SGV). Positions 173 and 193 each coordinate Mg(2+).

This sequence belongs to the TRAFAC class OBG-HflX-like GTPase superfamily. OBG GTPase family. In terms of assembly, monomer. The cofactor is Mg(2+).

It localises to the cytoplasm. An essential GTPase which binds GTP, GDP and possibly (p)ppGpp with moderate affinity, with high nucleotide exchange rates and a fairly low GTP hydrolysis rate. Plays a role in control of the cell cycle, stress response, ribosome biogenesis and in those bacteria that undergo differentiation, in morphogenesis control. This chain is GTPase Obg, found in Jannaschia sp. (strain CCS1).